Consider the following 199-residue polypeptide: Peptidyl-tRNA hydrolase (199 aa).

Tyr-25 contributes to the tRNA binding site. His-30 functions as the Proton acceptor in the catalytic mechanism. Residues Tyr-76, Asn-78, and Asn-124 each coordinate tRNA.

The protein belongs to the PTH family. In terms of assembly, monomer.

It localises to the cytoplasm. The enzyme catalyses an N-acyl-L-alpha-aminoacyl-tRNA + H2O = an N-acyl-L-amino acid + a tRNA + H(+). Functionally, hydrolyzes ribosome-free peptidyl-tRNAs (with 1 or more amino acids incorporated), which drop off the ribosome during protein synthesis, or as a result of ribosome stalling. In terms of biological role, catalyzes the release of premature peptidyl moieties from peptidyl-tRNA molecules trapped in stalled 50S ribosomal subunits, and thus maintains levels of free tRNAs and 50S ribosomes. The polypeptide is Peptidyl-tRNA hydrolase (Mycobacterium leprae (strain Br4923)).